A 49-amino-acid chain; its full sequence is MRELVKLVCTECGDENYHTTKNKKTTPDRLEMSKYCPRTRKYTLHREKK.

It belongs to the bacterial ribosomal protein bL33 family.

In Acholeplasma laidlawii (strain PG-8A), this protein is Large ribosomal subunit protein bL33B.